A 33-amino-acid chain; its full sequence is Protamine-1A (33 aa).

The tract at residues 1-33 is disordered; the sequence is PRRRRSSSRPVRRRRRPRRVSRRRRRRGGRRRR.

Testis.

It is found in the nucleus. It localises to the chromosome. Protamines substitute for histones in the chromatin of sperm during the haploid phase of spermatogenesis. They compact sperm DNA into a highly condensed, stable and inactive complex. The sequence is that of Protamine-1A from Oncorhynchus mykiss (Rainbow trout).